A 318-amino-acid polypeptide reads, in one-letter code: uncharacterized protein (318 aa).

The protein belongs to the glycosyltransferase 2 family.

This is an uncharacterized protein from Rickettsia typhi (strain ATCC VR-144 / Wilmington).